Here is a 472-residue protein sequence, read N- to C-terminus: Tryptophanase (472 aa).

Lys270 carries the N6-(pyridoxal phosphate)lysine modification.

Belongs to the beta-eliminating lyase family. In terms of assembly, homotetramer. Pyridoxal 5'-phosphate is required as a cofactor.

The enzyme catalyses L-tryptophan + H2O = indole + pyruvate + NH4(+). The protein operates within amino-acid degradation; L-tryptophan degradation via pyruvate pathway; indole and pyruvate from L-tryptophan: step 1/1. The polypeptide is Tryptophanase (tnaA) (Vibrio cholerae serotype O1 (strain ATCC 39315 / El Tor Inaba N16961)).